Here is a 205-residue protein sequence, read N- to C-terminus: MQPDLTLLGKLRSTWASATVNVIHPISLCLSWFLGTIGCSSPLPLRCADLRILLLKKKEFCLLPLFYHLGIFQHLFYPIIPLLAFCFYAPRLVCPAASLEFQRRYVVWILAVSRHIVFLENSYYIMLLHPHHLHHPHPPFLIFLFLILRKLRRNRSVKAQRIMQRSCHRLLFAPVGNDSELSAPSAPSESVVPLRRFNRQSVSTV.

4 helical membrane-spanning segments follow: residues 18–38, 69–89, 106–126, and 127–147; these read ATVN…GTIG, LGIF…CFYA, VVWI…YYIM, and LLHP…LFLI.

It localises to the mitochondrion membrane. This is an uncharacterized protein from Arabidopsis thaliana (Mouse-ear cress).